A 308-amino-acid chain; its full sequence is Adipolin (308 aa).

The N-terminal stretch at 1–21 is a signal peptide; it reads MWAWGWAAAALLWLQTAGAGA. Residues 36–119 are disordered; that stretch reads DSPNITTSNR…PPGSPGVGVT (84 aa). N-linked (GlcNAc...) asparagine glycosylation occurs at Asn39. Residues 82 to 93 are compositionally biased toward basic residues; that stretch reads RKRCRGRDKKSR. The span at 99-113 shows a compositional bias: pro residues; that stretch reads PGPPGPPGPPGPPGS. In terms of domain architecture, C1q spans 153–308; it reads QRLVVEAFYC…SSFSGMLLGT (156 aa).

The protein belongs to the adipolin/erythroferrone family. As to quaternary structure, homomultimer; disulfide-linked. Adipolin fC1QTNF12: homotrimer; disulfide-linked. Adipolin gC1QTNF12: homodimer; disulfide-linked. May interact with ERFE. Processed into Adipolin fC1QTNF12 and Adipolin gC1QTNF12 by FURIN. Insulin enhances endogenous C1QTNF12 cleavage. In terms of tissue distribution, widely expressed, with high expression in subcutaneous and epididymal white adipose tissues and brown adipose tissue. Expressed in adipocytes (at protein level).

The protein resides in the secreted. In terms of biological role, insulin-sensitizing adipocyte-secreted protein (adipokine) that regulates glucose metabolism in liver and adipose tissue. Promotes glucose uptake in adipocytes and suppresses de novo glucose production in hepatocytes via the PI3K-Akt signaling pathway. Administration lead to reduction of blood glucose. Able to attenuate inflammation in fat tissue. Acts by activating the Akt signaling in hepatocytes and adipocytes. Not able to increase insulin-stimulated glucose uptake in adipocytes. Its function is as follows. Acts by activating the MAP kinase. Increases insulin-stimulated glucose uptake in adipocytes. The protein is Adipolin (C1qtnf12) of Mus musculus (Mouse).